Here is a 199-residue protein sequence, read N- to C-terminus: MEPLVTHKGKAAVLNRINVDTDQIIPKQFLKRIERTGYGRFAFFDWRYLADGSPNPDFELNQPIYEGSSILIAGENFGCGSSREHAPWALDDYGFKIVIAPSFADIFHQNCFKNGMLPIRLDYDVWKTFAASYENKGYEMTVDLEKQQIEDHEGNITPFDVDPHWREMLLNGYDEISLTLLLEDDIQAFEDKRSSWLRA.

It belongs to the LeuD family. LeuD type 1 subfamily. As to quaternary structure, heterodimer of LeuC and LeuD.

It catalyses the reaction (2R,3S)-3-isopropylmalate = (2S)-2-isopropylmalate. It participates in amino-acid biosynthesis; L-leucine biosynthesis; L-leucine from 3-methyl-2-oxobutanoate: step 2/4. Functionally, catalyzes the isomerization between 2-isopropylmalate and 3-isopropylmalate, via the formation of 2-isopropylmaleate. The sequence is that of 3-isopropylmalate dehydratase small subunit from Bacillus pumilus (strain SAFR-032).